A 261-amino-acid chain; its full sequence is Pyridoxine-5'-phosphate oxidase (261 aa).

Pyridoxal 5'-phosphate is bound at residue 42-45 (RGDP). Position 95-98 (95-98 (RMVL)) interacts with FMN. Lys-100 lines the pyridoxal 5'-phosphate pocket. FMN-binding positions include 110-111 (FT), 116-117 (RK), and Gln-139. Residues Tyr-157, Arg-161, and Ser-165 each contribute to the pyridoxal 5'-phosphate site. FMN-binding positions include 174–175 (QS) and Trp-219. 225–227 (RLH) contributes to the pyridoxal 5'-phosphate binding site. Arg-229 contacts FMN. Thr-238 is subject to Phosphothreonine. Residue Ser-241 is modified to Phosphoserine.

It belongs to the pyridoxamine 5'-phosphate oxidase family. Homodimer. FMN serves as cofactor.

The enzyme catalyses pyridoxamine 5'-phosphate + O2 + H2O = pyridoxal 5'-phosphate + H2O2 + NH4(+). The catalysed reaction is pyridoxine 5'-phosphate + O2 = pyridoxal 5'-phosphate + H2O2. It participates in cofactor metabolism; pyridoxal 5'-phosphate salvage; pyridoxal 5'-phosphate from pyridoxamine 5'-phosphate: step 1/1. The protein operates within cofactor metabolism; pyridoxal 5'-phosphate salvage; pyridoxal 5'-phosphate from pyridoxine 5'-phosphate: step 1/1. Its function is as follows. Catalyzes the oxidation of either pyridoxine 5'-phosphate (PNP) or pyridoxamine 5'-phosphate (PMP) into pyridoxal 5'-phosphate (PLP). The protein is Pyridoxine-5'-phosphate oxidase (PNPO) of Bos taurus (Bovine).